The chain runs to 816 residues: Pentatricopeptide repeat-containing protein At5g12100, mitochondrial (816 aa).

The transit peptide at 1-39 (MVTRLRLVSRSSRYATVKFTDSVSACSCRRLFSASTDPE) directs the protein to the mitochondrion. The disordered stretch occupies residues 34-57 (ASTDPEPESQPEQAPPTNPVTGDE). 20 PPR repeats span residues 108 to 142 (HDFSYLLLSVLLNESKMISEAADLFFALRNEGIYP), 143 to 177 (SSDSLTLLLDHLVKTKQFRVTINVFLNILESDFRP), 178 to 212 (SKFMYGKAIQAAVKLSDVGKGLELFNRMKHDRIYP), 213 to 247 (SVFIYNVLIDGLCKGKRMNDAEQLFDEMLARRLLP), 248 to 282 (SLITYNTLIDGYCKAGNPEKSFKVRERMKADHIEP), 283 to 317 (SLITFNTLLKGLFKAGMVEDAENVLKEMKDLGFVP), 318 to 352 (DAFTFSILFDGYSSNEKAEAALGVYETAVDSGVKM), 353 to 387 (NAYTCSILLNALCKEGKIEKAEEILGREMAKGLVP), 388 to 422 (NEVIYNTMIDGYCRKGDLVGARMKIEAMEKQGMKP), 423 to 457 (DHLAYNCLIRRFCELGEMENAEKEVNKMKLKGVSP), 458 to 492 (SVETYNILIGGYGRKYEFDKCFDILKEMEDNGTMP), 493 to 527 (NVVSYGTLINCLCKGSKLLEAQIVKRDMEDRGVSP), 528 to 562 (KVRIYNMLIDGCCSKGKIEDAFRFSKEMLKKGIEL), 563 to 597 (NLVTYNTLIDGLSMTGKLSEAEDLLLEISRKGLKP), 598 to 632 (DVFTYNSLISGYGFAGNVQRCIALYEEMKRSGIKP), 633 to 662 (TLKTYHLLISLCTKEGIELTERLFGEMSLK), 664 to 698 (DLLVYNGVLHCYAVHGDMEKAFNLQKQMIEKSIGL), 699 to 733 (DKTTYNSLILGQLKVGKLCEVRSLIDEMNAREMEP), 734 to 768 (EADTYNIIVKGHCEVKDYMSAYVWYREMQEKGFLL), and 769 to 803 (DVCIGNELVSGLKEEWRSKEAEIVISEMNGRMLGD).

This sequence belongs to the PPR family. P subfamily.

The protein localises to the mitochondrion. This chain is Pentatricopeptide repeat-containing protein At5g12100, mitochondrial, found in Arabidopsis thaliana (Mouse-ear cress).